The primary structure comprises 353 residues: Photosystem II protein D1 (353 aa).

Thr-2 is modified (N-acetylthreonine). Thr-2 is subject to Phosphothreonine. 3 helical membrane-spanning segments follow: residues 29–46 (YIGW…TATS), 118–133 (HFLL…EWEL), and 142–156 (WIAV…AATA). Chlorophyll a is bound at residue His-118. Residue Tyr-126 coordinates pheophytin a. 2 residues coordinate [CaMn4O5] cluster: Asp-170 and Glu-189. Residues 197 to 218 (FHMLGVAGVFGGSLFSAMHGSL) form a helical membrane-spanning segment. His-198 is a binding site for chlorophyll a. A quinone-binding positions include His-215 and 264–265 (SF). His-215 is a Fe cation binding site. Residue His-272 participates in Fe cation binding. The helical transmembrane segment at 274 to 288 (FLAAWPVIGIWFTSL) threads the bilayer. 4 residues coordinate [CaMn4O5] cluster: His-332, Glu-333, Asp-342, and Ala-344. Residues 345–353 (AVEAPSTIG) constitute a propeptide that is removed on maturation.

It belongs to the reaction center PufL/M/PsbA/D family. As to quaternary structure, PSII is composed of 1 copy each of membrane proteins PsbA, PsbB, PsbC, PsbD, PsbE, PsbF, PsbH, PsbI, PsbJ, PsbK, PsbL, PsbM, PsbT, PsbX, PsbY, PsbZ, Psb30/Ycf12, at least 3 peripheral proteins of the oxygen-evolving complex and a large number of cofactors. It forms dimeric complexes. The D1/D2 heterodimer binds P680, chlorophylls that are the primary electron donor of PSII, and subsequent electron acceptors. It shares a non-heme iron and each subunit binds pheophytin, quinone, additional chlorophylls, carotenoids and lipids. D1 provides most of the ligands for the Mn4-Ca-O5 cluster of the oxygen-evolving complex (OEC). There is also a Cl(-1) ion associated with D1 and D2, which is required for oxygen evolution. The PSII complex binds additional chlorophylls, carotenoids and specific lipids. is required as a cofactor. Tyr-161 forms a radical intermediate that is referred to as redox-active TyrZ, YZ or Y-Z. Post-translationally, C-terminally processed by CTPA; processing is essential to allow assembly of the oxygen-evolving complex and thus photosynthetic growth.

It localises to the plastid. Its subcellular location is the chloroplast thylakoid membrane. The enzyme catalyses 2 a plastoquinone + 4 hnu + 2 H2O = 2 a plastoquinol + O2. Its function is as follows. Photosystem II (PSII) is a light-driven water:plastoquinone oxidoreductase that uses light energy to abstract electrons from H(2)O, generating O(2) and a proton gradient subsequently used for ATP formation. It consists of a core antenna complex that captures photons, and an electron transfer chain that converts photonic excitation into a charge separation. The D1/D2 (PsbA/PsbD) reaction center heterodimer binds P680, the primary electron donor of PSII as well as several subsequent electron acceptors. The polypeptide is Photosystem II protein D1 (Landoltia punctata (Dotted duckmeat)).